A 790-amino-acid chain; its full sequence is Cadherin-6 (790 aa).

The first 30 residues, Met-1–Gly-30, serve as a signal peptide directing secretion. The propeptide occupies Phe-31–Arg-53. 5 Cadherin domains span residues Ser-54 to Phe-159, Thr-160 to Phe-268, Pro-269 to Phe-383, Ser-384 to Pro-486, and Glu-487 to Pro-608. The Extracellular portion of the chain corresponds to Ser-54–Ala-615. Asn-165 and Asn-255 each carry an N-linked (GlcNAc...) asparagine glycan. The disordered stretch occupies residues Val-261 to Arg-289. Asn-437, Asn-455, and Asn-536 each carry an N-linked (GlcNAc...) asparagine glycan. A helical membrane pass occupies residues Leu-616–Leu-636. The Cytoplasmic portion of the chain corresponds to Arg-637 to Ser-790.

The protein resides in the cell membrane. In terms of biological role, cadherins are calcium-dependent cell adhesion proteins. They preferentially interact with themselves in a homophilic manner in connecting cells; cadherins may thus contribute to the sorting of heterogeneous cell types. In Gallus gallus (Chicken), this protein is Cadherin-6 (CDH6).